Here is a 303-residue protein sequence, read N- to C-terminus: N-acetyl-D-glucosamine kinase (303 aa).

Residues 4-11 (GFDIGGTK) and 133-140 (GVGGGLIF) contribute to the ATP site. Histidine 157, cysteine 177, cysteine 179, and cysteine 184 together coordinate Zn(2+).

The protein belongs to the ROK (NagC/XylR) family. NagK subfamily.

The catalysed reaction is N-acetyl-D-glucosamine + ATP = N-acetyl-D-glucosamine 6-phosphate + ADP + H(+). It participates in cell wall biogenesis; peptidoglycan recycling. Functionally, catalyzes the phosphorylation of N-acetyl-D-glucosamine (GlcNAc) derived from cell-wall degradation, yielding GlcNAc-6-P. This Escherichia coli O7:K1 (strain IAI39 / ExPEC) protein is N-acetyl-D-glucosamine kinase.